The chain runs to 506 residues: Histidine ammonia-lyase (506 aa).

The segment at residues 141 to 143 (ASG) is a cross-link (5-imidazolinone (Ala-Gly)). Position 142 is a 2,3-didehydroalanine (Ser) (serine 142).

Belongs to the PAL/histidase family. In terms of processing, contains an active site 4-methylidene-imidazol-5-one (MIO), which is formed autocatalytically by cyclization and dehydration of residues Ala-Ser-Gly.

It localises to the cytoplasm. The enzyme catalyses L-histidine = trans-urocanate + NH4(+). It functions in the pathway amino-acid degradation; L-histidine degradation into L-glutamate; N-formimidoyl-L-glutamate from L-histidine: step 1/3. This Burkholderia multivorans (strain ATCC 17616 / 249) protein is Histidine ammonia-lyase.